We begin with the raw amino-acid sequence, 470 residues long: E3 ubiquitin-protein ligase TRIM21 (470 aa).

The segment at 20–59 adopts an RING-type zinc-finger fold; that stretch reads CSICLDPMVEPMSIECGHCFCKECIFEVGKNGGSSCPECR. Residues cysteine 96, histidine 99, cysteine 118, and histidine 124 each contribute to the Zn(2+) site. The B box-type zinc finger occupies 96 to 127; the sequence is CMKHGEKLHLFCEEDGQALCWVCAQSGKHRDH. The stretch at 188–250 forms a coiled coil; the sequence is LQNSLLAQEE…RGSELELLQE (63 aa). The 199-residue stretch at 272 to 470 folds into the B30.2/SPRY domain; it reads DLTSTCPVPG…APLKLCPLKM (199 aa).

The protein belongs to the TRIM/RBCC family. As to quaternary structure, homotrimer. Component of a SCF(SKP2)-like complex containing CUL1, SKP1, TRIM21 and SKP2. Interacts with CALR, CUL1, FBXW11, HSPA5, IKBKB, IRF3, SKP1 and VCP. Interacts with SKP2; the interaction with SKP2 does not depend on an intact F-box domain. Interacts (via N-terminus and C-terminus) with DCP2 (via N-terminus and C-terminus). Interacts (via C-terminus) with IRF8 (via C-terminus). Interacts with ULK1, BECN1 and with ATG8 family members, including GABARAP, GABARAPL1, GABARAPL2 and MAP1LC3C/LC3C. Interacts with TRIM21 and SQSTM1/sequestosome 1. Interacts with IRF3. Interacts (via the SPRY domain) with NMI (via coiled-coil domain); the interaction promotes 'Lys-63'-linked ubiquitination of NMI. Interacts with IFI35 and NMI; the interaction facilitates NMI-IFI35 complex formation. In terms of processing, autoubiquitinated; does not lead to its proteasomal degradation. Deubiquitinated by USP4; leading to its stabilization. Autoubiquitinated.

Its subcellular location is the cytoplasm. The protein localises to the cytoplasmic vesicle. The protein resides in the autophagosome. It localises to the nucleus. It is found in the P-body. Its subcellular location is the stress granule. It catalyses the reaction S-ubiquitinyl-[E2 ubiquitin-conjugating enzyme]-L-cysteine + [acceptor protein]-L-lysine = [E2 ubiquitin-conjugating enzyme]-L-cysteine + N(6)-ubiquitinyl-[acceptor protein]-L-lysine.. It functions in the pathway protein modification; protein ubiquitination. E3 ubiquitin-protein ligase whose activity is dependent on E2 enzymes, UBE2D1, UBE2D2, UBE2E1 and UBE2E2. Forms a ubiquitin ligase complex in cooperation with the E2 UBE2D2 that is used not only for the ubiquitination of USP4 and IKBKB but also for its self-ubiquitination. Component of cullin-RING-based SCF (SKP1-CUL1-F-box protein) E3 ubiquitin-protein ligase complexes such as SCF(SKP2)-like complexes. A TRIM21-containing SCF(SKP2)-like complex is shown to mediate ubiquitination of CDKN1B ('Thr-187' phosphorylated-form), thereby promoting its degradation by the proteasome. Monoubiquitinates IKBKB that will negatively regulates Tax-induced NF-kappa-B signaling. Negatively regulates IFN-beta production post-pathogen recognition by catalyzing polyubiquitin-mediated degradation of IRF3. Mediates the ubiquitin-mediated proteasomal degradation of IgG1 heavy chain, which is linked to the VCP-mediated ER-associated degradation (ERAD) pathway. Promotes IRF8 ubiquitination, which enhanced the ability of IRF8 to stimulate cytokine genes transcription in macrophages. Plays a role in the regulation of the cell cycle progression. Enhances the decapping activity of DCP2. Exists as a ribonucleoprotein particle present in all mammalian cells studied and composed of a single polypeptide and one of four small RNA molecules. At least two isoforms are present in nucleated and red blood cells, and tissue specific differences in RO/SSA proteins have been identified. The common feature of these proteins is their ability to bind HY RNAs.2. Involved in the regulation of innate immunity and the inflammatory response in response to IFNG/IFN-gamma. Organizes autophagic machinery by serving as a platform for the assembly of ULK1, Beclin 1/BECN1 and ATG8 family members and recognizes specific autophagy targets, thus coordinating target recognition with assembly of the autophagic apparatus and initiation of autophagy. Also regulates autophagy through FIP200/RB1CC1 ubiquitination and subsequent decreased protein stability. Represses the innate antiviral response by facilitating the formation of the NMI-IFI35 complex through 'Lys-63'-linked ubiquitination of NMI. During viral infection, promotes cell pyroptosis by mediating 'Lys-6'-linked ubiquitination of ISG12a/IFI27, facilitating its translocation into the mitochondria and subsequent CASP3 activation. When up-regulated through the IFN/JAK/STAT signaling pathway, promotes 'Lys-27'-linked ubiquitination of MAVS, leading to the recruitment of TBK1 and up-regulation of innate immunity. Mediates 'Lys-63'-linked polyubiquitination of G3BP1 in response to heat shock, leading to stress granule disassembly. The chain is E3 ubiquitin-protein ligase TRIM21 (Trim21) from Mus musculus (Mouse).